Reading from the N-terminus, the 330-residue chain is Pre-mRNA-splicing factor 38 (330 aa).

The disordered stretch occupies residues 182-330; it reads SVLDEDLDDE…SRGERDRRRY (149 aa). Positions 184–199 are enriched in acidic residues; sequence LDEDLDDELPSDEEKA. Residues 213 to 224 show a composition bias toward basic residues; that stretch reads RRPRRVRSKSRS. The span at 240 to 330 shows a compositional bias: basic and acidic residues; sequence RSRDYYDELE…SRGERDRRRY (91 aa).

The protein belongs to the PRP38 family. Component of the spliceosome C complex. Interacts with Mfap1 (via C-terminus). Detected in all germal and follicle cells.

It localises to the nucleus. Its function is as follows. Required for pre-mRNA splicing. This Drosophila melanogaster (Fruit fly) protein is Pre-mRNA-splicing factor 38.